We begin with the raw amino-acid sequence, 254 residues long: Chalcone isomerase cfoK (254 aa).

Active-site residues include His33 and Tyr50.

It catalyses the reaction a chalcone = a flavanone.. It participates in secondary metabolite biosynthesis; flavonoid biosynthesis. Functionally, chalcone isomerase; part of the gene cluster that mediates the biosynthesis of chlorflavonin, a fungal flavonoid with acetolactate synthase inhibitory activity. Within the pathway, cfoK acts as chalcone isomerase (CHI), the key enzyme responsible for the tricyclic formation of flavanone through Michael-type intramolecular cyclization of chalcone. The hydrogen at C2'-OH is extracted by the imidazole ring of His-33, which induces the oxa-Michael addition to form the intermediate enolate through 6-endo-trig mode cyclization. The enolate can then be stabilized by a hydrogen bond with the Tyr-50 residue. Following enol tautomerization, the C ring, a gamma-pyranone ring, is formed. The pathway begins with the PKS-NRPS hybrid synthetase cfoA that uses benzoic acid or p-hydroxybenzoic acid as a starter unit with four rounds of chain elongation using malonyl-CoA to form the chalcone skeleton. Then, a new type of chalcone isomerase, cfoK, catalyzes the conversion of the chalcone into a flavanone by a histidine-mediated oxa-Michael addition mechanism. The desaturation of flavanone to flavone is catalyzed by a new type of flavone synthase, the flavin mononucleotide (FMN)-dependent oxidoreductase cfoJ. Monooxygenases cfoF, cfoG, and P450 cfoH are responsible for the hydroxylation of the flavonoid skeleton at sites C3, C8, and C2', respectively. Like cfoF, the dehydratase cfoI plays also a role in the hydroxylation of position C3. Methyltransferases cfoB, cfoC, and cfoD then catalyze the methylation of C7-OH, C8-OH, and C3-OH, respectively. Finally, the monooxygenase cfoE is responsible for the chlorination of flavonoid at position C3'. This is Chalcone isomerase cfoK from Aspergillus candidus.